The primary structure comprises 337 residues: Protein ABHD13 (337 aa).

Residues 37-57 (FHLYGGIVLLLLIFVSIAGIL) form a helical; Signal-anchor for type II membrane protein membrane-spanning segment. Catalysis depends on charge relay system residues Ser-193, Asp-268, and His-298. Asn-299 carries N-linked (GlcNAc...) asparagine glycosylation.

It belongs to the serine esterase family.

The protein localises to the membrane. The polypeptide is Protein ABHD13 (Mus musculus (Mouse)).